The sequence spans 73 residues: Translation initiation factor IF-1 (73 aa).

The S1-like domain occupies 1 to 73 (MAKKDGVIEI…TRGRIVYRYK (73 aa)).

This sequence belongs to the IF-1 family. In terms of assembly, component of the 30S ribosomal translation pre-initiation complex which assembles on the 30S ribosome in the order IF-2 and IF-3, IF-1 and N-formylmethionyl-tRNA(fMet); mRNA recruitment can occur at any time during PIC assembly.

The protein resides in the cytoplasm. Its function is as follows. One of the essential components for the initiation of protein synthesis. Stabilizes the binding of IF-2 and IF-3 on the 30S subunit to which N-formylmethionyl-tRNA(fMet) subsequently binds. Helps modulate mRNA selection, yielding the 30S pre-initiation complex (PIC). Upon addition of the 50S ribosomal subunit IF-1, IF-2 and IF-3 are released leaving the mature 70S translation initiation complex. The protein is Translation initiation factor IF-1 of Arthrobacter sp. (strain FB24).